Here is a 457-residue protein sequence, read N- to C-terminus: Cysteine--tRNA ligase (457 aa).

C28 is a Zn(2+) binding site. Residues 30 to 40 (PTVYDTAHIGN) carry the 'HIGH' region motif. Zn(2+) is bound by residues C212, H237, and E241. Positions 270 to 274 (KMSKS) match the 'KMSKS' region motif. Residue K273 coordinates ATP.

It belongs to the class-I aminoacyl-tRNA synthetase family. Monomer. It depends on Zn(2+) as a cofactor.

The protein localises to the cytoplasm. It catalyses the reaction tRNA(Cys) + L-cysteine + ATP = L-cysteinyl-tRNA(Cys) + AMP + diphosphate. The sequence is that of Cysteine--tRNA ligase from Wolbachia sp. subsp. Drosophila simulans (strain wRi).